A 310-amino-acid polypeptide reads, in one-letter code: Ribosomal RNA small subunit methyltransferase H (310 aa).

Residues G47–H49, D66, F93, D108, and Q115 each bind S-adenosyl-L-methionine. Positions R275–P310 are disordered. Positions R301–P310 are enriched in basic and acidic residues.

It belongs to the methyltransferase superfamily. RsmH family.

It localises to the cytoplasm. It catalyses the reaction cytidine(1402) in 16S rRNA + S-adenosyl-L-methionine = N(4)-methylcytidine(1402) in 16S rRNA + S-adenosyl-L-homocysteine + H(+). Its function is as follows. Specifically methylates the N4 position of cytidine in position 1402 (C1402) of 16S rRNA. This is Ribosomal RNA small subunit methyltransferase H from Synechococcus sp. (strain CC9311).